Consider the following 159-residue polypeptide: Protein Smg homolog (159 aa).

Belongs to the Smg family.

The polypeptide is Protein Smg homolog (Shewanella amazonensis (strain ATCC BAA-1098 / SB2B)).